Consider the following 254-residue polypeptide: UPF0246 protein CPE2152 (254 aa).

This sequence belongs to the UPF0246 family.

In Clostridium perfringens (strain 13 / Type A), this protein is UPF0246 protein CPE2152.